We begin with the raw amino-acid sequence, 329 residues long: Ferredoxin--NADP reductase 2 (329 aa).

Thr18, Glu37, Gln45, Tyr50, Val90, Phe124, Asp285, and Ser326 together coordinate FAD.

The protein belongs to the ferredoxin--NADP reductase type 2 family. As to quaternary structure, homodimer. Requires FAD as cofactor.

The catalysed reaction is 2 reduced [2Fe-2S]-[ferredoxin] + NADP(+) + H(+) = 2 oxidized [2Fe-2S]-[ferredoxin] + NADPH. The chain is Ferredoxin--NADP reductase 2 from Bacillus cytotoxicus (strain DSM 22905 / CIP 110041 / 391-98 / NVH 391-98).